The chain runs to 244 residues: Deoxynucleotide monophosphate kinase (244 aa).

Lys-10 contacts dGMP. 4 residues coordinate ATP: Arg-11, Gly-13, Asp-15, and Thr-16. Residues Ile-36, Lys-37, Arg-70, Arg-137, Gly-144, Thr-145, Val-149, Trp-157, Asp-180, Arg-182, Gln-183, Glu-186, and Thr-213 each contribute to the dGMP site.

It belongs to the dNMP kinase family. In terms of assembly, homodimer. Mg(2+) is required as a cofactor.

It carries out the reaction dTMP + ATP = dTDP + ADP. The enzyme catalyses dGMP + ATP = dGDP + ADP. The catalysed reaction is 5-hydroxymethyl-dCMP + ATP = 5-hydroxymethyl-dCDP + ADP. In terms of biological role, allows the synthesis of deoxyribonucleoside triphosphates necessary for the rapid viral DNA replication. Phosphorylates dGMP, dTMP and 5-hydroxymethyl-dCMP (hmdCMP) while excluding dCMP and dAMP. The phosphorylation of 5-hydroxymethyl-dCMP represents the first step in the replacement of cytosine by hydroxymethylcytosine in new viral DNA genomes. The polypeptide is Deoxynucleotide monophosphate kinase (1) (Escherichia phage RB69 (Bacteriophage RB69)).